Reading from the N-terminus, the 55-residue chain is Rubredoxin-2 (55 aa).

In terms of domain architecture, Rubredoxin-like spans 1 to 54 (MRKWQCVVCGFIYDEALGLPEEGIPAGTRWEDIPADWVCPDCGVGKIDFEMIEI). 4 residues coordinate Fe cation: cysteine 6, cysteine 9, cysteine 39, and cysteine 42.

This sequence belongs to the rubredoxin family. The cofactor is Fe(3+).

The protein resides in the cytoplasm. Its pathway is hydrocarbon metabolism; alkane degradation. Its function is as follows. Involved in the hydrocarbon hydroxylating system, which transfers electrons from NADH to rubredoxin reductase and then through rubredoxin to alkane 1 monooxygenase. In Pseudomonas aeruginosa (strain ATCC 15692 / DSM 22644 / CIP 104116 / JCM 14847 / LMG 12228 / 1C / PRS 101 / PAO1), this protein is Rubredoxin-2 (rubA2).